A 470-amino-acid polypeptide reads, in one-letter code: N amino acid transport system protein (470 aa).

The segment covering 1 to 11 (MDSQYETKKND) has biased composition (basic and acidic residues). The tract at residues 1 to 21 (MDSQYETKKNDPNAIMPYPES) is disordered. At 1–56 (MDSQYETKKNDPNAIMPYPESNDEHVGEVRGLGGGIMDKEPEAQEGHAKFHRLGWK) the chain is on the extracellular side. 2 helical membrane-spanning segments follow: residues 57–77 (RLTVVLIVEAIALGSLSLPGA) and 78–98 (FATLGMVPGVILSVGMGLICI). Over 99–131 (YTAHVIGQTKLKHPEIAHYADVGRVMFGRWGYE) the chain is Extracellular. A helical membrane pass occupies residues 132–152 (IISFMFVLQLIFIVGSHVLTG). Topologically, residues 153-168 (TIMWGTITDNGNGTCS) are cytoplasmic. 2 consecutive transmembrane segments (helical) span residues 169–189 (LVFGIVSAIILFLLAIPPSFA) and 191–211 (VAILGYIDFVSICAAILITMI). Residues 212–236 (ATGIRSSHQEGGLAAVPWSCWPKED) lie on the Cytoplasmic side of the membrane. Residues 237–257 (LSLAEGFIAVSNIVFAYSFAM) form a helical membrane-spanning segment. At 258-275 (CQFSFMDEMHTPSDYKKS) the chain is on the extracellular side. A helical transmembrane segment spans residues 276 to 296 (IVALGLIEIFIYTVTGGVVYA). Residues 297–316 (FVGPEVQSPALLSAGPLLAK) lie on the Cytoplasmic side of the membrane. A helical membrane pass occupies residues 317–337 (VAFGIALPVIFISGSINTVVV). The Extracellular segment spans residues 338–357 (SRYLIERIWPNNVIRYVNTP). The helical transmembrane segment at 358–378 (AGWMVWLGFDFGITLIAWVIA) threads the bilayer. Residues 379 to 386 (EAIPFFSD) lie on the Cytoplasmic side of the membrane. Residues 387–407 (LLAICSALFISGFSFYFPALM) form a helical membrane-spanning segment. Topologically, residues 408-427 (YFKITRNDAKSQGKKYFLDA) are extracellular. A helical membrane pass occupies residues 428 to 448 (LNMLCFVIGMGILGIGTYAAI). Residues 449–470 (QDIMDRYDHGKVSKPYSCAPLA) are Cytoplasmic-facing.

The protein belongs to the amino acid/polyamine transporter 2 family.

The protein localises to the membrane. Required for the transport of neutral aliphatic and aromatic amino acids via the N system. The protein is N amino acid transport system protein (mtr) of Neurospora crassa (strain ATCC 24698 / 74-OR23-1A / CBS 708.71 / DSM 1257 / FGSC 987).